Reading from the N-terminus, the 341-residue chain is HTH-type transcriptional repressor PurR (341 aa).

Positions 2–56 (ATIKDVAKRAGVSTTTVSHVINKTRFVAEETKAAVRAAIKELHYSPSAVARSLKV) constitute an HTH lacI-type domain. Residues 4 to 23 (IKDVAKRAGVSTTTVSHVIN) constitute a DNA-binding region (H-T-H motif). A DNA-binding region spans residues 48-56 (SAVARSLKV). Hypoxanthine-binding residues include tyrosine 73, arginine 190, threonine 192, phenylalanine 221, and aspartate 275.

As to quaternary structure, homodimer.

The protein operates within purine metabolism; purine nucleotide biosynthesis [regulation]. In terms of biological role, is the main repressor of the genes involved in the de novo synthesis of purine nucleotides, regulating purB, purC, purEK, purF, purHD, purL, purMN and guaBA expression. PurR is allosterically activated to bind its cognate DNA by binding the purine corepressors, hypoxanthine or guanine, thereby effecting transcription repression. The protein is HTH-type transcriptional repressor PurR of Pectobacterium atrosepticum (strain SCRI 1043 / ATCC BAA-672) (Erwinia carotovora subsp. atroseptica).